A 369-amino-acid polypeptide reads, in one-letter code: Flagellar P-ring protein (369 aa).

The signal sequence occupies residues 1–22 (MFNVRQLIATTLLLSCAFAAQA).

Belongs to the FlgI family. As to quaternary structure, the basal body constitutes a major portion of the flagellar organelle and consists of four rings (L,P,S, and M) mounted on a central rod.

It is found in the periplasm. It localises to the bacterial flagellum basal body. Assembles around the rod to form the L-ring and probably protects the motor/basal body from shearing forces during rotation. This Pseudomonas putida (strain ATCC 47054 / DSM 6125 / CFBP 8728 / NCIMB 11950 / KT2440) protein is Flagellar P-ring protein.